The chain runs to 595 residues: Parathyroid hormone/parathyroid hormone-related peptide receptor (595 aa).

The signal sequence occupies residues 1–28; that stretch reads MGAVRIAPGLALLLCCPVLSSAYALVDA. The Extracellular portion of the chain corresponds to 29–188; the sequence is DDVMTKEEQI…REREVFDRLG (160 aa). Cystine bridges form between Cys48–Cys117, Cys108–Cys148, and Cys131–Cys170. The disordered stretch occupies residues 66-103; sequence DKGWASASTSGKPKKEKASGKLYPESEEDKEVPTGSRH. 4 N-linked (GlcNAc...) asparagine glycosylation sites follow: Asn151, Asn161, Asn166, and Asn176. Residues 189–209 form a helical membrane-spanning segment; sequence MIYTVGYSVSLASLTVAVLIL. Topologically, residues 210–223 are cytoplasmic; sequence AYFRRLHCTRNYIH. Residues 224–244 traverse the membrane as a helical segment; the sequence is MHLFLSFMLRAVSIFVKDAVL. The Extracellular segment spans residues 245-294; that stretch reads YSGATLDEAERLTEEELRAIAQAPPPPTAAAGYAGCRVAVTFFLYFLATN. A helical membrane pass occupies residues 295 to 315; the sequence is YYWILVEGLYLHSLIFMAFFS. The Cytoplasmic portion of the chain corresponds to 316–318; that stretch reads EKK. A helical transmembrane segment spans residues 319 to 339; the sequence is YLWGFTVFGWGLPAVFVAVWV. Topologically, residues 340-360 are extracellular; the sequence is SVRATLANTGCWDLSSGNKKW. A helical transmembrane segment spans residues 361–381; it reads IIQVPILASIVLNFILFINIV. The Cytoplasmic segment spans residues 382-404; it reads RVLATKLRETNAGRCDTRQQYRK. The chain crosses the membrane as a helical span at residues 405-425; that stretch reads LLKSTLVLMPLFGVHYIVFMA. The Extracellular portion of the chain corresponds to 426-439; it reads TPYTEVSGTLWQVQ. The chain crosses the membrane as a helical span at residues 440–460; sequence MHYEMLFNSFQGFFVAIIYCF. Residues 461–595 are Cytoplasmic-facing; sequence CNGEVQAEIK…LLQEEWETVM (135 aa). The Important for interaction with G proteins motif lies at 473–476; it reads WSRW. The interval 528–595 is disordered; the sequence is TTTATTNGHP…LLQEEWETVM (68 aa). Low complexity predominate over residues 547-559; that stretch reads APTLPATPPATAA. Thr553 bears the Phosphothreonine mark.

It belongs to the G-protein coupled receptor 2 family. Homodimer in the absence of bound ligand. Peptide hormone binding leads to dissociation of the homodimer. In terms of processing, N-glycosylated. As to expression, high levels in the kidney, with much lower levels in aorta, heart, lung, prostate, testis, and skeletal muscle.

It is found in the cell membrane. In terms of biological role, G-protein-coupled receptor for parathyroid hormone (PTH) and for parathyroid hormone-related peptide (PTHLH). Ligand binding causes a conformation change that triggers signaling via guanine nucleotide-binding proteins (G proteins) and modulates the activity of downstream effectors, such as adenylate cyclase (cAMP). PTH1R is coupled to G(s) G alpha proteins and mediates activation of adenylate cyclase activity. PTHLH dissociates from PTH1R more rapidly than PTH; as consequence, the cAMP response induced by PTHLH decays faster than the response induced by PTH. The sequence is that of Parathyroid hormone/parathyroid hormone-related peptide receptor (PTH1R) from Canis lupus familiaris (Dog).